Here is a 590-residue protein sequence, read N- to C-terminus: Protein NRT1/ PTR FAMILY 6.4 (590 aa).

Positions Met1–Pro24 are disordered. The next 12 helical transmembrane spans lie at Ile48–Ser68, Ala73–Leu93, Val104–Ile124, Gly147–Ile167, Phe197–Asp217, Gly222–Gly242, Val332–Tyr352, Gly371–Phe391, Ile419–Ala439, Ala453–Gly473, Gly492–Val512, and Phe533–Met553.

The protein belongs to the major facilitator superfamily. Proton-dependent oligopeptide transporter (POT/PTR) (TC 2.A.17) family. In terms of tissue distribution, expressed in leaves, flowers and siliques. Detected in leaves.

It is found in the membrane. Functionally, low-affinity nitrate transporter. The polypeptide is Protein NRT1/ PTR FAMILY 6.4 (NPF6.4) (Arabidopsis thaliana (Mouse-ear cress)).